Reading from the N-terminus, the 67-residue chain is Surface composition regulator (67 aa).

The protein belongs to the GlgS family.

Its function is as follows. Major determinant of cell surface composition. Negatively regulates motility, adhesion and synthesis of biofilm exopolysaccharides. This is Surface composition regulator from Salmonella paratyphi A (strain ATCC 9150 / SARB42).